Reading from the N-terminus, the 447-residue chain is Coagulation factor VII (447 aa).

Residues 1–23 (MLSQAWALALLCFLLSLWGSLPA) form the signal peptide. A propeptide spanning residues 24 to 40 (VFLPQEQALSILHRPRR) is cleaved from the precursor. The Gla domain maps to 41–85 (ANGFLEELLPGSLERECREELCSFEEAHEIFRNEERTRQFWVSYN). 11 positions are modified to 4-carboxyglutamate: Glu-46, Glu-47, Glu-54, Glu-56, Glu-59, Glu-60, Glu-65, Glu-66, Glu-69, Glu-74, and Glu-75. Cys-57 and Cys-62 are joined by a disulfide. Residues 86 to 122 (DGDQCASSPCQNGGSCEDQLRSYICFCPDGFEGRNCE) form the EGF-like 1; calcium-binding domain. Disulfide bonds link Cys-90/Cys-101, Cys-95/Cys-110, Cys-112/Cys-121, Cys-131/Cys-142, Cys-138/Cys-152, Cys-154/Cys-167, Cys-175/Cys-302, Cys-199/Cys-204, Cys-218/Cys-234, and Cys-350/Cys-369. O-linked (Glc...) serine glycosylation is present at Ser-92. O-linked (Glc...) serine; alternate glycosylation is present at Ser-92. Residue Ser-92 is glycosylated (O-linked (Xyl...) serine; alternate). The O-linked (Fuc) serine glycan is linked to Ser-100. Positions 127–168 (SQLICANDNGGCEQYCGADPGAGRFCWCHEGYALQADGVSCA) constitute an EGF-like 2 domain. Asn-185 carries N-linked (GlcNAc...) asparagine glycosylation. The Peptidase S1 domain occupies 193–432 (IVGGHVCPKG…YTAWLRQLMG (240 aa)). His-233 serves as the catalytic Charge relay system. Asn-243 carries N-linked (GlcNAc...) asparagine glycosylation. Asp-282 acts as the Charge relay system in catalysis. Asp-378 provides a ligand contact to substrate. Cysteines 380 and 408 form a disulfide. Ser-384 (charge relay system) is an active-site residue.

The protein belongs to the peptidase S1 family. Heterodimer of a light chain and a heavy chain linked by a disulfide bond. The vitamin K-dependent, enzymatic carboxylation of some glutamate residues allows the modified protein to bind calcium. Post-translationally, O-glycosylated. O-fucosylated by POFUT1 on a conserved serine or threonine residue found in the consensus sequence C2-X(4,5)-[S/T]-C3 of EGF domains, where C2 and C3 are the second and third conserved cysteines. In terms of processing, can be either O-glucosylated or O-xylosylated at Ser-92 by POGLUT1. Plasma.

The protein localises to the secreted. It carries out the reaction Selective cleavage of Arg-|-Ile bond in factor X to form factor Xa.. In terms of biological role, initiates the extrinsic pathway of blood coagulation. Serine protease that circulates in the blood in a zymogen form. Factor VII is converted to factor VIIa by factor Xa, factor XIIa, factor IXa, or thrombin by minor proteolysis. In the presence of tissue factor and calcium ions, factor VIIa then converts factor X to factor Xa by limited proteolysis. Factor VIIa also converts factor IX to factor IXa in the presence of tissue factor and calcium. The polypeptide is Coagulation factor VII (F7) (Bos taurus (Bovine)).